The chain runs to 122 residues: Interferon alpha-inducible protein 27, mitochondrial (122 aa).

The N-terminal 33 residues, 1-33, are a transit peptide targeting the mitochondrion; the sequence is MEASALTSSAVTSVAKVVRVASGSAVVLPLARI. The helical transmembrane segment at 34 to 57 threads the bilayer; sequence ATVVIGGVVAMAAVPMVLSAMGFT. A Glycyl lysine isopeptide (Lys-Gly) (interchain with G-Cter in ubiquitin) cross-link involves residue Lys69. The next 2 helical transmembrane spans lie at 71-91 and 99-119; these read MSAA…VATL and LSGL…AVIA. The segment at 76–122 is mediates interaction with SKP2 and hepatitis C virus non-structural protein NS5A; the sequence is IANGGGVASGSLVATLQSLGATGLSGLTKFILGSIGSAIAAVIARFY. The interval 103 to 112 is required for hepatitis C virus non-structural protein NS5A degradation; that stretch reads TKFILGSIGS.

Belongs to the IFI6/IFI27 family. In terms of assembly, homodimer. Interacts with hepatitis C virus/HCV non-structural protein NS5A; promotes the ubiquitin-mediated proteasomal degradation of NS5A. Interacts with SKP2; promotes the ubiquitin-mediated proteasomal degradation of NS5A. Interacts with NR4A1. May interact with BCL2. In terms of processing, ubiquitinated by TRIM21 via 'Lys-6'-linked ubiquitin chains leading to IFI27 mitochondrial migration.

Its subcellular location is the mitochondrion membrane. The protein resides in the nucleus inner membrane. It localises to the endoplasmic reticulum membrane. In terms of biological role, probable adapter protein involved in different biological processes. Part of the signaling pathways that lead to apoptosis. Involved in type-I interferon-induced apoptosis characterized by a rapid and robust release of cytochrome C from the mitochondria and activation of BAX and caspases 2, 3, 6, 8 and 9. Also functions in TNFSF10-induced apoptosis. May also have a function in the nucleus, where it may be involved in the interferon-induced negative regulation of the transcriptional activity of NR4A1, NR4A2 and NR4A3 through the enhancement of XPO1-mediated nuclear export of these nuclear receptors. May thereby play a role in the vascular response to injury. In the innate immune response, has an antiviral activity towards hepatitis C virus/HCV. May prevent the replication of the virus by recruiting both the hepatitis C virus non-structural protein 5A/NS5A and the ubiquitination machinery via SKP2, promoting the ubiquitin-mediated proteasomal degradation of NS5A. Also promotes virus-induced pyroptosis by activating CASP3 in the mitochondria after 'Lys-6'-linked ubiquitination by TRIM21. The sequence is that of Interferon alpha-inducible protein 27, mitochondrial from Homo sapiens (Human).